An 890-amino-acid polypeptide reads, in one-letter code: DNA mismatch repair protein MutS (890 aa).

Basic and acidic residues predominate over residues 1 to 13; sequence MDKGINLQNDKEP. The disordered stretch occupies residues 1–23; sequence MDKGINLQNDKEPSPMAEGNPAD. 649–656 serves as a coordination point for ATP; the sequence is GPNMGGKS.

Belongs to the DNA mismatch repair MutS family.

Its function is as follows. This protein is involved in the repair of mismatches in DNA. It is possible that it carries out the mismatch recognition step. This protein has a weak ATPase activity. The sequence is that of DNA mismatch repair protein MutS from Paracidovorax citrulli (strain AAC00-1) (Acidovorax citrulli).